A 1125-amino-acid polypeptide reads, in one-letter code: MDAFGDYVWPRATSELILLPVTGLECVGDRLLAGEGPDLLVYNLDLGGHLRMVKRVQNLLGHFLIHGFRVRPEPKGDLDSEAMIAVFGSKGLKVVKVSWGQSHLRELWRSGLWNMSDWIWDVRWIEGNVAVALGHNSVVLYDPVIGCMLQDVPCTDRCTLSSACLVGDTWKELTIVAGAVSNELLIWYPATALTDNKPVAPDRRVSGHVGVIFSMSYLESKGLLATASEDRSVRLWKVGDLRVPGGRVQNIGHCFGHSARVWQVKLLENYLISAGEDCVCLVWSHEGEILQAFRGHRGRGIRAIATHERQAWVVTGGDDSGIRLWHLAGRGYPGLGVSSLSFKSPSRPGALKAVTLAGSWRVLAVTDVGSLYLYDLEVKSWEQLLEDNRFRSYCLLEAAPGPEGFGLCALANGEGLVKVVPINTPTAAVEQKLFQGKVHSLSWALRGYEELLLLASGPGGVIACLEISAAPTGKAIFVKERCRYLLPPSKQRWHTCSAFLPPGDFLVCGDRRGSVMLFPVRPCLFKKPGAGSKAITAAEAPGAGSGSGGSESVPTGIGPVSTLHSLHGKQGVTSVTCHGGYLYSTGRDSSYFQLFVHGGHLQPVLRQKACRGMNWVAGLRMVPDGSMVILGFHANEFVVWSPRSHEKLHIVNCGGGHRSWAFSDTEAAMAFTYLKDGEVMLYRALGGCIRPNVILREGLHGREITCVKRVGTVTLGPEFEVPNLEHPDSLEPGSEGPGLIDIVITGSEDTTVCVLALPTTTGSAHALTSVCNHISSVRALAVWAVGTPGGPQDTRPGLTAQVVSAGGRAEIHCFSVMVTPDASTPSRLACHVMHLSSHRLDEYWDRQRNKHKMIKVDPETRYMSLAICELDNDRPGLGPGPLVAAACSDGAVRLFLLQDSGRILHLLAESFHHKRCVLKVHSFTHEAPNQRRRLILCSAATDGSLAFWDLTTAMDKGSTTLELPAHPGLPYQMGTPSMTVQAHSCGVNSLHTLPTPEGHHLVASGSEDGSLHVFTLAVKMPEPEEADGEAELVPQLCVLEEYSVPCAHAAHVTGVKILSPKLMVSASIDQRLTFWRLGQGEPTFMNSTVYHVPDVADMDCWPVSPEFGHRCALAGQGLEVYNWYD.

Methionine 1 bears the N-acetylmethionine mark. 19 WD repeats span residues valine 53–valine 97, arginine 105–proline 143, cysteine 147–proline 189, alanine 200–valine 238, arginine 247–histidine 285, isoleucine 289–leucine 327, leucine 335–leucine 376, tryptophan 381–isoleucine 422, proline 425–alanine 470, isoleucine 476–valine 520, proline 559–glycine 598, valine 604–proline 642, histidine 645–alanine 684, leucine 739–valine 785, arginine 848–leucine 897, histidine 905–leucine 950, glycine 974–leucine 1016, glutamate 1040–leucine 1077, and threonine 1083–aspartate 1125.

This sequence belongs to the WD repeat WDR6 family. In terms of assembly, interacts with FTSJ1; the interaction is direct, and required for 2'-O-methylation of position 34 in substrate tRNAs. Interacts with IRS4. Interacts with STK11/LKB1.

It is found in the cytoplasm. Functionally, together with methyltransferase FTSJ1, methylates the 2'-O-ribose of nucleotides at position 34 of the tRNA anticodon loop of substrate tRNAs. Required for the correct positioning of the substrate tRNA for methylation. Required to suppress amino acid starvation-induced autophagy. Enhances the STK11/LKB1-induced cell growth suppression activity. In Mus musculus (Mouse), this protein is tRNA (34-2'-O)-methyltransferase regulator WDR6 (Wdr6).